The chain runs to 124 residues: Aspartate 1-decarboxylase (124 aa).

The active-site Schiff-base intermediate with substrate; via pyruvic acid is the Ser25. A Pyruvic acid (Ser) modification is found at Ser25. Position 57 (Thr57) interacts with substrate. The active-site Proton donor is the Tyr58. 73–75 is a binding site for substrate; that stretch reads GAA.

Belongs to the PanD family. In terms of assembly, heterooctamer of four alpha and four beta subunits. The cofactor is pyruvate. In terms of processing, is synthesized initially as an inactive proenzyme, which is activated by self-cleavage at a specific serine bond to produce a beta-subunit with a hydroxyl group at its C-terminus and an alpha-subunit with a pyruvoyl group at its N-terminus.

The protein resides in the cytoplasm. The catalysed reaction is L-aspartate + H(+) = beta-alanine + CO2. Its pathway is cofactor biosynthesis; (R)-pantothenate biosynthesis; beta-alanine from L-aspartate: step 1/1. In terms of biological role, catalyzes the pyruvoyl-dependent decarboxylation of aspartate to produce beta-alanine. The sequence is that of Aspartate 1-decarboxylase from Clostridium beijerinckii (strain ATCC 51743 / NCIMB 8052) (Clostridium acetobutylicum).